A 159-amino-acid chain; its full sequence is Ribosomal RNA large subunit methyltransferase H (159 aa).

S-adenosyl-L-methionine is bound by residues leucine 76, glycine 108, and 127–132 (FSKMTF).

It belongs to the RNA methyltransferase RlmH family. In terms of assembly, homodimer.

Its subcellular location is the cytoplasm. The catalysed reaction is pseudouridine(1915) in 23S rRNA + S-adenosyl-L-methionine = N(3)-methylpseudouridine(1915) in 23S rRNA + S-adenosyl-L-homocysteine + H(+). Its function is as follows. Specifically methylates the pseudouridine at position 1915 (m3Psi1915) in 23S rRNA. The chain is Ribosomal RNA large subunit methyltransferase H from Bifidobacterium adolescentis (strain ATCC 15703 / DSM 20083 / NCTC 11814 / E194a).